The primary structure comprises 714 residues: P-loop NTPase domain-containing protein LPA1 (714 aa).

A compositionally biased stretch (low complexity) spans 1-11 (MPMPPQCASSK). 3 disordered regions span residues 1–42 (MPMP…PPPK), 259–293 (QKLD…PRTE), and 595–689 (FGSE…GSGN). Residues 271–285 (EGRDDTSDDKAHHGS) are compositionally biased toward basic and acidic residues. Positions 595–617 (FGSEEDADDPPDAGTDEDLTDEE) are enriched in acidic residues. Residues 618 to 636 (RDMHEIEAGSVDEHSTKSD) show a composition bias toward basic and acidic residues. The span at 659-670 (AASSTKNSSNQE) shows a compositional bias: polar residues.

In terms of tissue distribution, expressed in roots, leaf blade shoots, leaf sheath shoots and panicles.

Its function is as follows. Required for the accumulation of phytic acid in seeds. Phytic acid is the primary storage form of phosphorus in cereal grains and other plant seeds. The chain is P-loop NTPase domain-containing protein LPA1 from Oryza sativa subsp. japonica (Rice).